Reading from the N-terminus, the 269-residue chain is MNNEQLITNVKPKKEPLKTAIEIKDFNFFYNKGKTQSLFNINMEIKEKSITTFIGPSGCGKTTLLKSINRLNDLIDGVKMSGAIKIFDKDIFASDIDITKLRTEVGMVFQKPNPFPISIYDNVVYGLRSLGIKDKAILDQICEESLIKAALWDEVKDILNSPALGLSGGQQQRLCIARAIAMKPKILLMDEPTSALDPIATLKVEELVLDLKKDYTIVMVTHSLQQATRISDYTAYFLKGELIEFNKTKKIFTNPKDRRTENYISGRYE.

Residues 21 to 264 (IEIKDFNFFY…PKDRRTENYI (244 aa)) form the ABC transporter domain. 55-62 (GPSGCGKT) serves as a coordination point for ATP.

It belongs to the ABC transporter superfamily. Phosphate importer (TC 3.A.1.7) family. As to quaternary structure, the complex is composed of two ATP-binding proteins (PstB), two transmembrane proteins (PstC and PstA) and a solute-binding protein (PstS).

It localises to the cell membrane. The catalysed reaction is phosphate(out) + ATP + H2O = ADP + 2 phosphate(in) + H(+). Functionally, part of the ABC transporter complex PstSACB involved in phosphate import. Responsible for energy coupling to the transport system. The chain is Phosphate import ATP-binding protein PstB from Mycoplasma capricolum subsp. capricolum (strain California kid / ATCC 27343 / NCTC 10154).